The following is a 239-amino-acid chain: ATP synthase subunit a (239 aa).

5 helical membrane passes run 17 to 37 (GTVC…VYFF), 75 to 95 (FHLL…IGLI), 113 to 133 (DPFV…LFGV), 182 to 202 (LLTL…PLAI), and 206 to 226 (MVWI…FVTL).

This sequence belongs to the ATPase A chain family. As to quaternary structure, F-type ATPases have 2 components, CF(1) - the catalytic core - and CF(0) - the membrane proton channel. CF(1) has five subunits: alpha(3), beta(3), gamma(1), delta(1), epsilon(1). CF(0) has three main subunits: a(1), b(2) and c(9-12). The alpha and beta chains form an alternating ring which encloses part of the gamma chain. CF(1) is attached to CF(0) by a central stalk formed by the gamma and epsilon chains, while a peripheral stalk is formed by the delta and b chains.

The protein localises to the cell membrane. In terms of biological role, key component of the proton channel; it plays a direct role in the translocation of protons across the membrane. This chain is ATP synthase subunit a, found in Enterococcus hirae (strain ATCC 9790 / DSM 20160 / JCM 8729 / LMG 6399 / NBRC 3181 / NCIMB 6459 / NCDO 1258 / NCTC 12367 / WDCM 00089 / R).